Consider the following 185-residue polypeptide: Elongation factor P (185 aa).

This sequence belongs to the elongation factor P family.

It localises to the cytoplasm. The protein operates within protein biosynthesis; polypeptide chain elongation. Involved in peptide bond synthesis. Stimulates efficient translation and peptide-bond synthesis on native or reconstituted 70S ribosomes in vitro. Probably functions indirectly by altering the affinity of the ribosome for aminoacyl-tRNA, thus increasing their reactivity as acceptors for peptidyl transferase. The protein is Elongation factor P (efp) of Lactococcus lactis subsp. lactis (strain IL1403) (Streptococcus lactis).